Reading from the N-terminus, the 499-residue chain is Phenylalanine--tRNA ligase alpha subunit (499 aa).

L-phenylalanine contacts are provided by residues Thr330, 372 to 374 (QVE), and Tyr412. A Mg(2+)-binding site is contributed by Glu414. Residue Phe438 coordinates L-phenylalanine.

It belongs to the class-II aminoacyl-tRNA synthetase family. Phe-tRNA synthetase alpha subunit type 2 subfamily. As to quaternary structure, tetramer of two alpha and two beta subunits. The cofactor is Mg(2+).

Its subcellular location is the cytoplasm. It catalyses the reaction tRNA(Phe) + L-phenylalanine + ATP = L-phenylalanyl-tRNA(Phe) + AMP + diphosphate + H(+). In Schizosaccharomyces pombe (strain 972 / ATCC 24843) (Fission yeast), this protein is Phenylalanine--tRNA ligase alpha subunit (frs2).